Here is a 234-residue protein sequence, read N- to C-terminus: Large ribosomal subunit protein uL1 (234 aa).

The protein belongs to the universal ribosomal protein uL1 family. Part of the 50S ribosomal subunit.

Binds directly to 23S rRNA. The L1 stalk is quite mobile in the ribosome, and is involved in E site tRNA release. Its function is as follows. Protein L1 is also a translational repressor protein, it controls the translation of the L11 operon by binding to its mRNA. This is Large ribosomal subunit protein uL1 from Salmonella arizonae (strain ATCC BAA-731 / CDC346-86 / RSK2980).